The sequence spans 326 residues: MNWEVVKLRLNMALATLGIVLLGFALALAVADYAFGAQFGVGLMLSILMFIFFLNIIQWLFGPYMINWAYRTVEVTPTDPVYGWLYSTVAEVAKYNGFRDVPKVYIADVPFPNAFAYGSPIAGKRIAFTLPILKLLNRDEIMAVAGHELGHLKHRDVELLMAVGLIPALIYYLGWWIFWGGMFGGGGGNGRGNNGGLLFLIGIAMMAVSFVFQLLVLSINRMREAYADVNSALTVPGGKENLQLALAKLTLSMDPGALEKFKKKSTTNQMASMLFFTNAIEEVPTWNARELVEIWKTTKVPWYAEIFMDHPHPAKRIQLLEKVSKY.

Helical transmembrane passes span 10–30 (LNMA…ALAV) and 41–61 (VGLM…QWLF). Histidine 147 is a binding site for Zn(2+). Residue glutamate 148 is part of the active site. Histidine 151 contacts Zn(2+). The next 2 membrane-spanning stretches (helical) occupy residues 159 to 179 (LLMA…WIFW) and 197 to 217 (LLFL…LLVL). Position 224 (glutamate 224) interacts with Zn(2+).

The protein belongs to the peptidase M48B family. The cofactor is Zn(2+).

It localises to the cell membrane. This Saccharolobus islandicus (strain Y.N.15.51 / Yellowstone #2) (Sulfolobus islandicus) protein is Protease HtpX homolog.